We begin with the raw amino-acid sequence, 490 residues long: MHNLSAQPWQAKMANLTYDNVTLSNRSEVAIQPPTNYKTVELVFIATVTGSLSLVTVVGNILVMLSIKVNRQLQTVNNYFLFSLACADLIIGVFSMNLYTVYIIKGYWPLGAVVCDLWLALDYVVSNASVMNLLIISFDRYFCVTKPLTYPARRTTKMAGLMIAAAWILSFILWAPAILFWQFIVGKRTVHERECYIQFLSNPAVTFGTAIAAFYLPVVIMTVLYIHISLASRSRVRRHKPESRKERKGKSLSFFKAPPVKQNNNNSPKRAVEVKEEVRNGKVDDQPSAQTEATGQQEEKETSNESSTVSMTQTTKDKPTTEILPAGQGQSPAHPRVNPTSKWSKIKIVTKQTGTESVTAIEIVPAKAGASDHNSLSNSRPANVARKFASIARSQVRKKRQMAAREKKVTRTIFAILLAFILTWTPYNVMVLINTFCETCVPETVWSIGYWLCYVNSTINPACYALCNATFKKTFKHLLMCQYRNIGTAR.

Over 1–42 (MHNLSAQPWQAKMANLTYDNVTLSNRSEVAIQPPTNYKTVEL) the chain is Extracellular. Residues asparagine 3, asparagine 15, asparagine 20, and asparagine 25 are each glycosylated (N-linked (GlcNAc...) asparagine). Residues 43–64 (VFIATVTGSLSLVTVVGNILVM) traverse the membrane as a helical segment. Over 65-78 (LSIKVNRQLQTVNN) the chain is Cytoplasmic. Residues 79-99 (YFLFSLACADLIIGVFSMNLY) traverse the membrane as a helical segment. Over 100 to 116 (TVYIIKGYWPLGAVVCD) the chain is Extracellular. Cysteine 115 and cysteine 195 form a disulfide bridge. The chain crosses the membrane as a helical span at residues 117 to 138 (LWLALDYVVSNASVMNLLIISF). Topologically, residues 139–158 (DRYFCVTKPLTYPARRTTKM) are cytoplasmic. Residues 159-181 (AGLMIAAAWILSFILWAPAILFW) form a helical membrane-spanning segment. The Extracellular segment spans residues 182–203 (QFIVGKRTVHERECYIQFLSNP). A helical transmembrane segment spans residues 204–226 (AVTFGTAIAAFYLPVVIMTVLYI). Residues 227-412 (HISLASRSRV…AAREKKVTRT (186 aa)) are Cytoplasmic-facing. Over residues 236–250 (VRRHKPESRKERKGK) the composition is skewed to basic residues. The interval 236–343 (VRRHKPESRK…HPRVNPTSKW (108 aa)) is disordered. Residues 270 to 285 (RAVEVKEEVRNGKVDD) show a composition bias toward basic and acidic residues. Composition is skewed to polar residues over residues 287 to 296 (PSAQTEATGQ) and 304 to 314 (NESSTVSMTQT). A helical transmembrane segment spans residues 413 to 433 (IFAILLAFILTWTPYNVMVLI). Residues 434–447 (NTFCETCVPETVWS) lie on the Extracellular side of the membrane. The chain crosses the membrane as a helical span at residues 448–467 (IGYWLCYVNSTINPACYALC). Topologically, residues 468–490 (NATFKKTFKHLLMCQYRNIGTAR) are cytoplasmic.

This sequence belongs to the G-protein coupled receptor 1 family. Muscarinic acetylcholine receptor subfamily. CHRM4 sub-subfamily. Expressed in heart and brain.

Its subcellular location is the cell membrane. The protein resides in the postsynaptic cell membrane. Its function is as follows. The muscarinic acetylcholine receptor mediates various cellular responses, including inhibition of adenylate cyclase, breakdown of phosphoinositides and modulation of potassium channels through the action of G proteins. Primary transducing effect is inhibition of adenylate cyclase. May couple to multiple functional responses in cell lines. This Gallus gallus (Chicken) protein is Muscarinic acetylcholine receptor M4 (CHRM4).